The primary structure comprises 605 residues: Formin-binding protein 1-like (605 aa).

One can recognise an F-BAR domain in the interval 1–263 (MSWGTELWDQ…AAKSVDERRD (263 aa)). The stretch at 66 to 258 (FTSCIAFFNI…EGMILAAKSV (193 aa)) forms a coiled coil. The segment at 245 to 535 (SKCLEGMILA…EFDDEFEDDD (291 aa)) is interaction with CDC42. At Ser295 the chain carries Phosphoserine. Residues 392-484 (LEDFSHLPPE…VEGKTGIRGD (93 aa)) are a coiled coil. An REM-1 domain is found at 397–474 (HLPPEQRRKK…IHKNEAWLSE (78 aa)). Residues 482–538 (RGDRRHSSDINHLVTQGRESPEGSYTDDANQEVRGPPQQHGHHSEFDDEFEDDDPLP) form a disordered region. Ser488, Ser501, and Ser505 each carry phosphoserine. Positions 522–605 (GHHSEFDDEF…VTLEKSSKGS (84 aa)) are interaction with DNM1. Positions 527–536 (FDDEFEDDDP) are enriched in acidic residues. The region spanning 538 to 599 (PAIGHCKAIY…PTTYIDVTLE (62 aa)) is the SH3 domain. The interaction with DNM2 and WASL stretch occupies residues 541-597 (GHCKAIYPFDGHNEGTLAMKEGEVLYIIEEDKGDGWTRARRQNGEEGYVPTTYIDVT). The interval 541-605 (GHCKAIYPFD…VTLEKSSKGS (65 aa)) is interaction with DAAM1, DIAPH1 and DIAPH2.

This sequence belongs to the FNBP1 family. Homodimerizes, the dimers can polymerize end-to-end to form filamentous structures. Interacts with GTP-bound CDC42. Interacts with DAAM1, DIAPH1, DIAPH2, DNM1, DNM2 and WASL/N-WASP. Interacts with ATG3. Interacts (via SH3 domain) with ABI1, WASF2, CDC42 and WIPF1.

The protein localises to the cytoplasm. Its subcellular location is the cytoskeleton. The protein resides in the cell cortex. It localises to the cytoplasmic vesicle. It is found in the cell membrane. Functionally, required to coordinate membrane tubulation with reorganization of the actin cytoskeleton during endocytosis. May bind to lipids such as phosphatidylinositol 4,5-bisphosphate and phosphatidylserine and promote membrane invagination and the formation of tubules. Also promotes CDC42-induced actin polymerization by activating the WASL-WASPIP complex, the predominant form of WASL/N-WASP in cells. Actin polymerization may promote the fission of membrane tubules to form endocytic vesicles. Essential for autophagy of intracellular bacterial pathogens. This Mus musculus (Mouse) protein is Formin-binding protein 1-like (Fnbp1l).